The following is a 212-amino-acid chain: Ribosomal RNA small subunit methyltransferase G (212 aa).

S-adenosyl-L-methionine is bound by residues Gly-75, Leu-80, 126–127 (AQ), and Arg-141.

It belongs to the methyltransferase superfamily. RNA methyltransferase RsmG family.

Its subcellular location is the cytoplasm. Its function is as follows. Specifically methylates the N7 position of guanine in position 518 of 16S rRNA. In Beutenbergia cavernae (strain ATCC BAA-8 / DSM 12333 / CCUG 43141 / JCM 11478 / NBRC 16432 / NCIMB 13614 / HKI 0122), this protein is Ribosomal RNA small subunit methyltransferase G.